An 86-amino-acid polypeptide reads, in one-letter code: MERNNRKVLVGRVVSDKMDKTITVVVETKRNHPVYGKRINYSKKYKAHDENNVAKEGDIVRIMETRPLSATKRFRLVEVVEEAVII.

The protein belongs to the universal ribosomal protein uS17 family. As to quaternary structure, part of the 30S ribosomal subunit.

Functionally, one of the primary rRNA binding proteins, it binds specifically to the 5'-end of 16S ribosomal RNA. The protein is Small ribosomal subunit protein uS17 of Streptococcus gordonii (strain Challis / ATCC 35105 / BCRC 15272 / CH1 / DL1 / V288).